Reading from the N-terminus, the 580-residue chain is Conglutin beta 3 (580 aa).

Residues 1–30 form the signal peptide; sequence MAKMRVRFPTLVLLLGIVFLMAVSIGIAYG. Basic and acidic residues-rich tracts occupy residues 37-72 and 79-92; these read NHER…RESE and REQR…REQE. The tract at residues 37–165 is disordered; sequence NHERPQEREQ…DSRRQRNPYY (129 aa). Positions 124-133 are enriched in low complexity; that stretch reads QGSSSSSRRQ. A compositionally biased stretch (basic and acidic residues) spans 134–145; that stretch reads SGYERREQREER. Cupin type-1 domains lie at 164 to 322 and 381 to 538; these read YYFS…EEIQ and FNLR…EDVE. N-linked (GlcNAc...) asparagine glycosylation is found at Asn229 and Asn488. Residues 549 to 569 are disordered; that stretch reads FANAQPQQQQQREREGRHGRR.

The protein belongs to the 7S seed storage protein family. As to quaternary structure, component of globulins complexes which accumulate in seeds.

Seed storage protein. Accumulates during seed development and is hydrolyzed after germination to provide a carbon and nitrogen source for the developing seedling. This is Conglutin beta 3 from Lupinus angustifolius (Narrow-leaved blue lupine).